The chain runs to 421 residues: Nacrein-like protein M (421 aa).

Asparagine 27 is a glycosylation site (N-linked (GlcNAc...) asparagine). Residues 33–420 (AGFSYDRSIC…KNKVTVYKSF (388 aa)) form the Alpha-carbonic anhydrase domain. 3 residues coordinate Zn(2+): histidine 132, histidine 134, and histidine 157. The segment covering 197 to 206 (DGFGDEPDDE) has biased composition (acidic residues). The tract at residues 197 to 303 (DGFGDEPDDE…GENGHKHGCR (107 aa)) is disordered. Basic and acidic residues predominate over residues 207–219 (ECKRILKGHHPDN). Positions 220 to 295 (NENGNGDNGN…NNGDNGNNGE (76 aa)) are enriched in low complexity. 24 tandem repeats follow at residues 225–227 (GDN), 228–230 (GNN), 231–233 (GYN), 234–236 (GDN), 237–239 (GNN), 240–242 (GDN), 243–245 (GNN), 246–248 (GYN), 249–251 (GDN), 252–254 (GNN), 255–257 (GDN), 258–260 (GNN), 261–263 (GYN), 264–266 (GDN), 267–269 (GNN), 270–272 (GDN), 273–275 (GNN), 276–278 (GEN), 279–281 (GNN), 282–284 (GEN), 285–287 (GNN), 288–290 (GDN), 291–292 (GN), and 294–296 (GEN). Residues 225–296 (GDNGNNGYNG…NGDNGNNGEN (72 aa)) form a 24 X 3 AA approximate tandem repeats of G-X-N region. 361–362 (TT) contacts substrate.

Belongs to the alpha-carbonic anhydrase family. As to quaternary structure, homooligomer; disulfide-linked. May also be disulfide-linked to insoluble organic matrix. It depends on Zn(2+) as a cofactor. Expressed in the mantle.

Its subcellular location is the secreted. The protein localises to the extracellular space. The protein resides in the extracellular matrix. It carries out the reaction hydrogencarbonate + H(+) = CO2 + H2O. Acts as a negative regulator for calcification in the shells of mollusks. May function both as a calcium concentrator and as a carbonic anhydrase required for production of carbonate ions, which are assembled to CaCO(3) at mineralization sites. Is important for shell formation in both the calcitic prismatic layer and the aragonitic nacreous layerr. Shows inhibitory activity of crystal formation when present in free state but, when attached to the insoluble matrix, may regulate the form and size of aragonite crystal. This is Nacrein-like protein M from Pinctada maxima (Silver-lipped pearl oyster).